The primary structure comprises 252 residues: L-aspartate dehydrogenase (252 aa).

Residues A119 and N175 each contribute to the NAD(+) site. H203 is a catalytic residue.

It belongs to the L-aspartate dehydrogenase family.

The enzyme catalyses L-aspartate + NADP(+) + H2O = oxaloacetate + NH4(+) + NADPH + H(+). The catalysed reaction is L-aspartate + NAD(+) + H2O = oxaloacetate + NH4(+) + NADH + H(+). The protein operates within cofactor biosynthesis; NAD(+) biosynthesis; iminoaspartate from L-aspartate (dehydrogenase route): step 1/1. Functionally, specifically catalyzes the NAD or NADP-dependent dehydrogenation of L-aspartate to iminoaspartate. In Methanospirillum hungatei JF-1 (strain ATCC 27890 / DSM 864 / NBRC 100397 / JF-1), this protein is L-aspartate dehydrogenase.